The chain runs to 258 residues: E3 ubiquitin-protein ligase RNF170 (258 aa).

At 1–24 (MAKYQGEVQSLKLDDDSVIEGVSD) the chain is on the lumenal side. Residues 25 to 45 (QVLVAVVVSFALIATLVYALF) form a helical membrane-spanning segment. The Cytoplasmic portion of the chain corresponds to 46-201 (RNVHQNIHPE…GGLFWMFRIR (156 aa)). The RING-type zinc-finger motif lies at 87–130 (CPICLHQASFPVETNCGHLFCGACIIAYWRYGSWLGAISCPICR). The helical transmembrane segment at 202–222 (IILCLMGAFFYLISPLDFVPE) threads the bilayer. Position 223 (Ala-223) is a topological domain, lumenal. A helical membrane pass occupies residues 224–244 (LFGILGFLDDFFVIFLLLIYI). Over 245–258 (SIMYREVITQRLTR) the chain is Cytoplasmic.

As to quaternary structure, (Microbial infection) Interacts with human cytomegalovirus protein NEC2/UL50; this interaction promotes of UBA7 ubiquitination and subsequent proteasomal degradation. In terms of assembly, constitutively associated with the ERLIN1/ERLIN 2 complex. Interacts with activated ITPR1. As to expression, expressed in the spinal cord.

The protein localises to the endoplasmic reticulum membrane. The catalysed reaction is S-ubiquitinyl-[E2 ubiquitin-conjugating enzyme]-L-cysteine + [acceptor protein]-L-lysine = [E2 ubiquitin-conjugating enzyme]-L-cysteine + N(6)-ubiquitinyl-[acceptor protein]-L-lysine.. It participates in protein modification; protein ubiquitination. E3 ubiquitin-protein ligase that plays an essential role in stimulus-induced inositol 1,4,5-trisphosphate receptor type 1 (ITPR1) ubiquitination and degradation via the endoplasmic reticulum-associated degradation (ERAD) pathway. Also involved in ITPR1 turnover in resting cells. Selectively inhibits the TLR3-triggered innate immune response by promoting the 'Lys-48'-linked polyubiquitination and degradation of TLR3. The protein is E3 ubiquitin-protein ligase RNF170 (RNF170) of Homo sapiens (Human).